Consider the following 293-residue polypeptide: Pyridoxal 5'-phosphate synthase subunit PdxS (293 aa).

D23 contacts D-ribose 5-phosphate. Residue K80 is the Schiff-base intermediate with D-ribose 5-phosphate of the active site. G152 is a D-ribose 5-phosphate binding site. D-glyceraldehyde 3-phosphate is bound at residue R164. D-ribose 5-phosphate is bound by residues G213 and 234–235; that span reads GS.

Belongs to the PdxS/SNZ family. In the presence of PdxT, forms a dodecamer of heterodimers.

The enzyme catalyses aldehydo-D-ribose 5-phosphate + D-glyceraldehyde 3-phosphate + L-glutamine = pyridoxal 5'-phosphate + L-glutamate + phosphate + 3 H2O + H(+). The protein operates within cofactor biosynthesis; pyridoxal 5'-phosphate biosynthesis. Catalyzes the formation of pyridoxal 5'-phosphate from ribose 5-phosphate (RBP), glyceraldehyde 3-phosphate (G3P) and ammonia. The ammonia is provided by the PdxT subunit. Can also use ribulose 5-phosphate and dihydroxyacetone phosphate as substrates, resulting from enzyme-catalyzed isomerization of RBP and G3P, respectively. This is Pyridoxal 5'-phosphate synthase subunit PdxS from Syntrophus aciditrophicus (strain SB).